The chain runs to 398 residues: MGRTIFLLISVVLVAYYIYIPLPDDIEEPWKIILGNTLLKLGGDLASFGELLGLNHFMDTVQLFMRFQVVPPTSDENVTVMETDFNSVPVRIYIPKRKSTTLRRGLFFIHGGGWCLGSAAYFMYDTLSRRTAHRLDAVVVSTDYGLAPKYHFPKQFEDVYHSLRWFLQEDILEKYGVDPRRVGVSGDSAGGNLTAAVTQQILQDPDVKIKLKVQALIYPALQALDMNVPSQQENSQYPLLTRSLLIRFWSEYFTTDRDLEKAMLLNQHVPVEFSHLLQFVNWSSLLPQRYKKGYFYKTPTPGSLELAQKYPGFTDVKACPLLANDSILHHLPMTYIITCQYDVLRDDGLMYVKRLQNTGVHVTHHHIEDGFHGALTLPGLKITYRMQNQYLNWLHKNL.

Over 1–5 (MGRTI) the chain is Cytoplasmic. Residues 6–26 (FLLISVVLVAYYIYIPLPDDI) form a helical; Signal-anchor for type II membrane protein membrane-spanning segment. Residues 27 to 398 (EEPWKIILGN…QYLNWLHKNL (372 aa)) lie on the Lumenal side of the membrane. The N-linked (GlcNAc...) asparagine glycan is linked to N77. Residues 110–112 (HGG) carry the Involved in the stabilization of the negatively charged intermediate by the formation of the oxyanion hole motif. C115 and C339 form a disulfide bridge. S188 is an active-site residue. 3 N-linked (GlcNAc...) asparagine glycosylation sites follow: N192, N281, and N324. Residues D342 and H372 contribute to the active site.

It belongs to the 'GDXG' lipolytic enzyme family. Highest levels in liver with lower levels in jejunum, kidney and testis.

Its subcellular location is the endoplasmic reticulum membrane. It is found in the microsome membrane. The catalysed reaction is a triacylglycerol + H2O = a diacylglycerol + a fatty acid + H(+). Functionally, displays cellular triglyceride lipase activity in liver, increases the levels of intracellular fatty acids derived from the hydrolysis of newly formed triglyceride stores and plays a role in very low-density lipoprotein assembly. Displays serine esterase activity in liver. Deacetylates a variety of arylacetamide substrates, including xenobiotic compounds and procarcinogens, converting them to the primary arylamide compounds and increasing their toxicity. This chain is Arylacetamide deacetylase (Aadac), found in Rattus norvegicus (Rat).